Here is a 396-residue protein sequence, read N- to C-terminus: Elongation factor Tu (396 aa).

The 196-residue stretch at 10 to 205 (KPHVNIGTIG…AVDESIPDPV (196 aa)) folds into the tr-type G domain. The segment at 19-26 (GHVDHGKT) is G1. 19 to 26 (GHVDHGKT) contributes to the GTP binding site. Threonine 26 lines the Mg(2+) pocket. A G2 region spans residues 62 to 66 (GITIN). The interval 83 to 86 (DAPG) is G3. Residues 83 to 87 (DAPGH) and 138 to 141 (NKAD) each bind GTP. The tract at residues 138–141 (NKAD) is G4. The G5 stretch occupies residues 175-177 (SAL).

The protein belongs to the TRAFAC class translation factor GTPase superfamily. Classic translation factor GTPase family. EF-Tu/EF-1A subfamily. In terms of assembly, monomer.

The protein localises to the cytoplasm. It catalyses the reaction GTP + H2O = GDP + phosphate + H(+). Functionally, GTP hydrolase that promotes the GTP-dependent binding of aminoacyl-tRNA to the A-site of ribosomes during protein biosynthesis. This chain is Elongation factor Tu, found in Rhodococcus jostii (strain RHA1).